Consider the following 218-residue polypeptide: Small ribosomal subunit protein uS5 (218 aa).

Positions 1 to 10 (MTQATNQTPG) are enriched in polar residues. Positions 1-63 (MTQATNQTPG…GRDERDSEWQ (63 aa)) are disordered. A compositionally biased stretch (low complexity) spans 11–25 (QDVPGAADVPAAAEG). A compositionally biased stretch (basic and acidic residues) spans 31–63 (GERRGGGGGRGGDRRGRGDRRGRGRDERDSEWQ). An S5 DRBM domain is found at 62–125 (WQERVIQIRR…ADGKKHLVKV (64 aa)).

Belongs to the universal ribosomal protein uS5 family. As to quaternary structure, part of the 30S ribosomal subunit. Contacts proteins S4 and S8.

Functionally, with S4 and S12 plays an important role in translational accuracy. In terms of biological role, located at the back of the 30S subunit body where it stabilizes the conformation of the head with respect to the body. The sequence is that of Small ribosomal subunit protein uS5 from Synechococcus sp. (strain RCC307).